The primary structure comprises 516 residues: Gastrula zinc finger protein XlCGF53.1 (516 aa).

2 disordered regions span residues 1–33 and 200–220; these read MGMWEEASDTGMKGKKKKKDKNEEEEEERGKKE and GNQSDCSINPLTEQIQGTDKP. The span at 200–218 shows a compositional bias: polar residues; the sequence is GNQSDCSINPLTEQIQGTD. C2H2-type zinc fingers lie at residues 312 to 334, 354 to 376, 382 to 404, 410 to 432, 438 to 460, 466 to 488, and 494 to 516; these read YICSECQKHFSTKAGLARHQKTH, FPCSECGKRFARRQHLTDHQSSH, YACSQCEKYFPHRSNLNRHLKLH, FPCSQCGKRFPCVSDLNIHRRVH, YSCSECGKCFKHHSNLTNHQRTH, and FSCTECGKGFKDRSSLTVHHRTH.

It belongs to the krueppel C2H2-type zinc-finger protein family.

It localises to the nucleus. Its function is as follows. May be involved in transcriptional regulation. In Xenopus laevis (African clawed frog), this protein is Gastrula zinc finger protein XlCGF53.1.